The primary structure comprises 354 residues: tRNA N6-adenosine threonylcarbamoyltransferase (354 aa).

Positions 121, 125, and 142 each coordinate a divalent metal cation. Substrate contacts are provided by residues 142 to 146 (YVSGG), Asp-174, Gly-189, Glu-193, and Asn-285. Asp-313 contributes to the a divalent metal cation binding site.

The protein belongs to the KAE1 / TsaD family. As to quaternary structure, component of the EKC/KEOPS complex composed of at least bud32, cgi121, gon7, kae1 and pcc1; the whole complex dimerizes. A divalent metal cation is required as a cofactor.

The protein localises to the cytoplasm. It localises to the nucleus. The enzyme catalyses L-threonylcarbamoyladenylate + adenosine(37) in tRNA = N(6)-L-threonylcarbamoyladenosine(37) in tRNA + AMP + H(+). Its function is as follows. Component of the EKC/KEOPS complex that is required for the formation of a threonylcarbamoyl group on adenosine at position 37 (t(6)A37) in tRNAs that read codons beginning with adenine. The complex is probably involved in the transfer of the threonylcarbamoyl moiety of threonylcarbamoyl-AMP (TC-AMP) to the N6 group of A37. Kae1 likely plays a direct catalytic role in this reaction, but requires other protein(s) of the complex to fulfill this activity. The EKC/KEOPS complex also promotes both telomere uncapping and telomere elongation. The complex is required for efficient recruitment of transcriptional coactivators. This chain is tRNA N6-adenosine threonylcarbamoyltransferase (gpe-1), found in Neurospora crassa (strain ATCC 24698 / 74-OR23-1A / CBS 708.71 / DSM 1257 / FGSC 987).